The chain runs to 440 residues: Ribosomal protein uS12 methylthiotransferase RimO (440 aa).

The 117-residue stretch at 1–117 (MKVHLTSLGC…VIEAVAGKES (117 aa)) folds into the MTTase N-terminal domain. Residues Cys10, Cys46, Cys80, Cys155, Cys159, and Cys162 each coordinate [4Fe-4S] cluster. Residues 141–371 (CATPHTVYVK…MTAQIDISSR (231 aa)) enclose the Radical SAM core domain. The region spanning 374 to 440 (AKRVGSREPV…SAYDLTGEAQ (67 aa)) is the TRAM domain.

It belongs to the methylthiotransferase family. RimO subfamily. It depends on [4Fe-4S] cluster as a cofactor.

Its subcellular location is the cytoplasm. It carries out the reaction L-aspartate(89)-[ribosomal protein uS12]-hydrogen + (sulfur carrier)-SH + AH2 + 2 S-adenosyl-L-methionine = 3-methylsulfanyl-L-aspartate(89)-[ribosomal protein uS12]-hydrogen + (sulfur carrier)-H + 5'-deoxyadenosine + L-methionine + A + S-adenosyl-L-homocysteine + 2 H(+). Functionally, catalyzes the methylthiolation of an aspartic acid residue of ribosomal protein uS12. The chain is Ribosomal protein uS12 methylthiotransferase RimO from Desulfosudis oleivorans (strain DSM 6200 / JCM 39069 / Hxd3) (Desulfococcus oleovorans).